The sequence spans 195 residues: Imidazoleglycerol-phosphate dehydratase (195 aa).

It belongs to the imidazoleglycerol-phosphate dehydratase family.

The protein resides in the cytoplasm. It carries out the reaction D-erythro-1-(imidazol-4-yl)glycerol 3-phosphate = 3-(imidazol-4-yl)-2-oxopropyl phosphate + H2O. Its pathway is amino-acid biosynthesis; L-histidine biosynthesis; L-histidine from 5-phospho-alpha-D-ribose 1-diphosphate: step 6/9. The chain is Imidazoleglycerol-phosphate dehydratase from Heliobacterium modesticaldum (strain ATCC 51547 / Ice1).